The primary structure comprises 479 residues: MPPALRVRFAPSPTGYLHIGGARTALMNFLQARRQGGTFVLRMEDTDQGRSTPESVQAILDGLNWLGIDWDEGPGKEGPYAPYFQMQRLDTYRKHADQLIAEGKAYRCYCTKEDLDAQRQVAEKAGGAFKYPGTCRERTEPPAGRNAADAVIRFKMPAGDGSVSFTDKALGTITKTHSDLDDWVMMRADGIPVYNFGCVIDDHLMDITLVARGQEHVNSTFPQLMLYQALGWTPPDFAHLPLILGPDREKLSKRKHPEADVMVHKRNGVMPEALLNFVIRLGWSHGNDEVISREQMLEWFDFSDVGTTSGVWNPEKLLWLNQQWMKQLPVETVVERLLPFLEAKGIQAKGDPRLETLVRTLRERSNTLEDIATTAANVYFRSGITLDEKAATKHLSGESLNLLRKVRETLTALPEWSVEALDGVVKQVSEASSVGMGKVAQPIRVALTGNTTSPGIGETLVLVGRDESLLRIDAALTRG.

The short motif at 11–21 (PSPTGYLHIGG) is the 'HIGH' region element. Residues Cys-108, Cys-110, Cys-135, and Glu-137 each contribute to the Zn(2+) site. The 'KMSKS' region signature appears at 250–254 (KLSKR). Lys-253 is an ATP binding site.

The protein belongs to the class-I aminoacyl-tRNA synthetase family. Glutamate--tRNA ligase type 1 subfamily. In terms of assembly, monomer. Zn(2+) is required as a cofactor.

The protein localises to the cytoplasm. The enzyme catalyses tRNA(Glu) + L-glutamate + ATP = L-glutamyl-tRNA(Glu) + AMP + diphosphate. Catalyzes the attachment of glutamate to tRNA(Glu) in a two-step reaction: glutamate is first activated by ATP to form Glu-AMP and then transferred to the acceptor end of tRNA(Glu). In Myxococcus xanthus (strain DK1622), this protein is Glutamate--tRNA ligase.